We begin with the raw amino-acid sequence, 283 residues long: Pantothenate synthetase (283 aa).

30–37 (MGALHEGH) provides a ligand contact to ATP. Histidine 37 serves as the catalytic Proton donor. Glutamine 61 serves as a coordination point for (R)-pantoate. Glutamine 61 contributes to the beta-alanine binding site. Residue 147 to 150 (GEKD) coordinates ATP. Position 153 (glutamine 153) interacts with (R)-pantoate. Residues valine 176 and 184 to 187 (VSSR) contribute to the ATP site.

This sequence belongs to the pantothenate synthetase family. As to quaternary structure, homodimer.

The protein localises to the cytoplasm. The enzyme catalyses (R)-pantoate + beta-alanine + ATP = (R)-pantothenate + AMP + diphosphate + H(+). It functions in the pathway cofactor biosynthesis; (R)-pantothenate biosynthesis; (R)-pantothenate from (R)-pantoate and beta-alanine: step 1/1. Functionally, catalyzes the condensation of pantoate with beta-alanine in an ATP-dependent reaction via a pantoyl-adenylate intermediate. This chain is Pantothenate synthetase, found in Chlorobium limicola (strain DSM 245 / NBRC 103803 / 6330).